Consider the following 390-residue polypeptide: MNGTRNWCTLVDVHPEDQAAGSVDILRLTLQGELTGDELEHIAQKAGRKTYAMVSSHSAGHSLASELVESHDGHEEIIKVYLKGRSGDKMIHEKNINQLKSEVQYIQEARNCLQKLREDISSKLDRNLGDSLHRQEIQVVLEKPNGFSQSPTALYSSPPEVDTCINEDVESLRKTVQDLLAKLQEAKRQHQSDCVAFEVTLSRYQREAEQSNVALQREEDRVEQKEAEVGELQRRLLGMETEHQALLAKVREGEVALEELRSNNADCQAEREKAATLEKEVAGLREKIHHLDDMLKSQQRKVRQMIEQLQNSKAVIQSKDATIQELKEKIAYLEAENLEMHDRMEHLIEKQISHGNFSTQARAKTENPGSIRISKPPSPKPMPVIRVVET.

2 coiled-coil regions span residues 88 to 126 and 162 to 351; these read DKMIHEKNINQLKSEVQYIQEARNCLQKLREDISSKLDR and DTCI…IEKQ. Positions 358 to 390 are disordered; the sequence is STQARAKTENPGSIRISKPPSPKPMPVIRVVET.

This sequence belongs to the tuftelin family. In terms of assembly, interacts with TFIP11. Expressed in the epidermis (at protein level). Present in the extracellular enamel and is mainly associated with the crystal component.

It localises to the secreted. Functionally, involved in the structural organization of the epidermis. Involved in the mineralization and structural organization of enamel. This chain is Tuftelin (TUFT1), found in Homo sapiens (Human).